Consider the following 45-residue polypeptide: Large ribosomal subunit protein bL34 (45 aa).

It belongs to the bacterial ribosomal protein bL34 family.

In Salinispora arenicola (strain CNS-205), this protein is Large ribosomal subunit protein bL34.